The chain runs to 361 residues: 5-formaminoimidazole-4-carboxamide-1-(beta)-D-ribofuranosyl 5'-monophosphate synthetase (361 aa).

Residues His27 and Ser94 each coordinate 5-amino-1-(5-phospho-beta-D-ribosyl)imidazole-4-carboxamide. The ATP-grasp domain maps to 116-348 (RAILRWEAER…MGQRIAKEIK (233 aa)). ATP contacts are provided by residues 146–208 (PDEI…ANYC) and Glu230. Asn258 provides a ligand contact to 5-amino-1-(5-phospho-beta-D-ribosyl)imidazole-4-carboxamide. Residues Gln297 and Glu310 each contribute to the Mg(2+) site.

The protein belongs to the phosphohexose mutase family. It depends on Mg(2+) as a cofactor. Mn(2+) serves as cofactor.

The enzyme catalyses 5-amino-1-(5-phospho-beta-D-ribosyl)imidazole-4-carboxamide + formate + ATP = 5-formamido-1-(5-phospho-D-ribosyl)imidazole-4-carboxamide + ADP + phosphate. It participates in purine metabolism; IMP biosynthesis via de novo pathway; 5-formamido-1-(5-phospho-D-ribosyl)imidazole-4-carboxamide from 5-amino-1-(5-phospho-D-ribosyl)imidazole-4-carboxamide (formate route): step 1/1. Its function is as follows. Catalyzes the ATP- and formate-dependent formylation of 5-aminoimidazole-4-carboxamide-1-beta-d-ribofuranosyl 5'-monophosphate (AICAR) to 5-formaminoimidazole-4-carboxamide-1-beta-d-ribofuranosyl 5'-monophosphate (FAICAR) in the absence of folates. The polypeptide is 5-formaminoimidazole-4-carboxamide-1-(beta)-D-ribofuranosyl 5'-monophosphate synthetase (Methanococcus vannielii (strain ATCC 35089 / DSM 1224 / JCM 13029 / OCM 148 / SB)).